Consider the following 304-residue polypeptide: Putative S-adenosyl-L-methionine-dependent methyltransferase MAV_4444 (304 aa).

Residues D130 and 159 to 160 (DL) each bind S-adenosyl-L-methionine.

It belongs to the UPF0677 family.

In terms of biological role, exhibits S-adenosyl-L-methionine-dependent methyltransferase activity. This chain is Putative S-adenosyl-L-methionine-dependent methyltransferase MAV_4444, found in Mycobacterium avium (strain 104).